Here is an 89-residue protein sequence, read N- to C-terminus: Small ribosomal subunit protein uS17 (89 aa).

Belongs to the universal ribosomal protein uS17 family. In terms of assembly, part of the 30S ribosomal subunit.

In terms of biological role, one of the primary rRNA binding proteins, it binds specifically to the 5'-end of 16S ribosomal RNA. This is Small ribosomal subunit protein uS17 from Paracidovorax citrulli (strain AAC00-1) (Acidovorax citrulli).